Here is a 629-residue protein sequence, read N- to C-terminus: Embryonic polyadenylate-binding protein B (629 aa).

4 RRM domains span residues 11–89, 99–175, 191–268, and 294–370; these read ASLY…WSQR, GNVF…HFKS, TNVY…RAQK, and VNLY…LAQR. One can recognise a PABC domain in the interval 539–616; sequence QEPLTASLLA…AVAVLQAHQA (78 aa).

It belongs to the polyadenylate-binding protein type-1 family. In terms of assembly, interacts with dazl in an RNA-independent manner. The C-terminus can self-associate and also interact with the C-terminus of pabpc1, independently of RNA. RRM 1 and RRM 2 interact with both eif4g1 and paip1, and the C-terminus also interacts with paip1. Prior to oocyte maturation, found in a complex with dazl and pum2 proteins and spdy1 mRNA; pum2 dissociates from the complex during maturation. Interacts with the translation termination factor sup35/erf3.

It is found in the cytoplasm. Functionally, binds and protects the poly(A) tail of mRNA with or without an AU-rich element (ARE) and prevents mRNA deadenylation. Stimulates the translation of mRNAs to which it is bound during early development. The sequence is that of Embryonic polyadenylate-binding protein B (epabp-b) from Xenopus laevis (African clawed frog).